A 247-amino-acid chain; its full sequence is UPF0246 protein LCABL_22600 (247 aa).

The protein belongs to the UPF0246 family.

This is UPF0246 protein LCABL_22600 from Lacticaseibacillus casei (strain BL23) (Lactobacillus casei).